The primary structure comprises 417 residues: Transcobalamin-1 (417 aa).

A signal peptide spans 1-25 (MRQSHQLPLVGLLLFSLIPSQLCQS). The interval 24–308 (QSCVVSEKDY…DVTKLLLVPK (285 aa)) is globular N-terminal alpha domain. N-linked (GlcNAc...) asparagine glycosylation is present at asparagine 90. 143 to 147 (TNYYQ) lines the cyanocob(III)alamin pocket. Cysteines 156 and 198 form a disulfide. Residues asparagine 161, asparagine 166, and asparagine 179 are each glycosylated (N-linked (GlcNAc...) asparagine). Positions 187 and 287 each coordinate cyanocob(III)alamin. A flexible linker region spans residues 309–327 (VQVNITDEPVPVVPTLSPE). N-linked (GlcNAc...) asparagine glycosylation is found at asparagine 312, asparagine 328, asparagine 345, and asparagine 360. Residues 328-417 (NISVIYCVKI…GIMLSKMESI (90 aa)) form a globular C-terminal beta domain region. Residues 376-377 (YI) and 393-395 (WEH) contribute to the cyanocob(III)alamin site.

This sequence belongs to the eukaryotic cobalamin transport proteins family. In terms of processing, contains about 30% carbohydrates. As to expression, haptocorrins are a family of cobalamin-binding glycoproteins found in blood, salivary and mucosal secretions.

It localises to the secreted. Functionally, binds vitamin B12 with femtomolar affinity and protects it from the acidic environment of the stomach. Binds to cobalamin and to cobalamin analogs such as cobinamide. This chain is Transcobalamin-1 (TCN1), found in Sus scrofa (Pig).